The chain runs to 364 residues: Dihydroorotate dehydrogenase (quinone) (364 aa).

Residues 61–65 (AGFDK) and Ser85 contribute to the FMN site. Lys65 serves as a coordination point for substrate. Residue 110–114 (NRMGF) participates in substrate binding. Residues Asn139 and Asn170 each contribute to the FMN site. Residue Asn170 coordinates substrate. Ser173 (nucleophile) is an active-site residue. Asn175 provides a ligand contact to substrate. Positions 214 and 242 each coordinate FMN. Residue 243 to 244 (NT) participates in substrate binding. FMN contacts are provided by residues Gly266, Gly295, and 316–317 (YS).

The protein belongs to the dihydroorotate dehydrogenase family. Type 2 subfamily. In terms of assembly, monomer. FMN serves as cofactor.

Its subcellular location is the cell membrane. The enzyme catalyses (S)-dihydroorotate + a quinone = orotate + a quinol. It functions in the pathway pyrimidine metabolism; UMP biosynthesis via de novo pathway; orotate from (S)-dihydroorotate (quinone route): step 1/1. Functionally, catalyzes the conversion of dihydroorotate to orotate with quinone as electron acceptor. This Bradyrhizobium sp. (strain BTAi1 / ATCC BAA-1182) protein is Dihydroorotate dehydrogenase (quinone).